A 343-amino-acid polypeptide reads, in one-letter code: MQEHYYKFWREMIKPKGFEVDRDSLRDDYAKFIIRPLERGFGVTLGNSLRRILLSSMMGSAITAVKFEGVLHEFTTIPDVLEDVTDIILNLKEVRFKQYTADSLTLKISKKGPGKVTAADIQTTDKIEVLNPDLPIATLGANANFNAEIVVSFGRGYVPVENRETDLPVGFIGVDALYSPIRKVNYNVSNARVGQRTDYDALTLEVWTDGSLKPEEAVALSSKIMKEQLQIFLTFDETMEPAEEARELGSPTLNENLFRSVDDLELSVRSANCLKNANIRYIGELVVRSEAEMLKTKNFGRKSLNEIKEILGEMGLGLGMKIEGWPPAGWDPSQPPQKRETQQ.

An alpha N-terminal domain (alpha-NTD) region spans residues 1–236 (MQEHYYKFWR…EQLQIFLTFD (236 aa)). An alpha C-terminal domain (alpha-CTD) region spans residues 253-343 (LNENLFRSVD…QPPQKRETQQ (91 aa)).

This sequence belongs to the RNA polymerase alpha chain family. Homodimer. The RNAP catalytic core consists of 2 alpha, 1 beta, 1 beta' and 1 omega subunit. When a sigma factor is associated with the core the holoenzyme is formed, which can initiate transcription.

The enzyme catalyses RNA(n) + a ribonucleoside 5'-triphosphate = RNA(n+1) + diphosphate. Functionally, DNA-dependent RNA polymerase catalyzes the transcription of DNA into RNA using the four ribonucleoside triphosphates as substrates. The chain is DNA-directed RNA polymerase subunit alpha from Bdellovibrio bacteriovorus (strain ATCC 15356 / DSM 50701 / NCIMB 9529 / HD100).